The primary structure comprises 91 residues: Ixochymostatin (91 aa).

The signal sequence occupies residues 1-20 (MKTYVLQALLLTLAVAVVRA). Cystine bridges form between Cys34–Cys70, Cys43–Cys66, Cys48–Cys62, Cys53–Cys90, and Cys72–Cys84. In terms of domain architecture, TIL spans 34-90 (CAEGETWKECVGSSCAELTCEHPEPSLGCTYDCNYGCYCAPDFFRNANKECVKKDKC).

This sequence belongs to the serine protease inhibitor-like (TIL domain-containing) family. In terms of tissue distribution, salivary gland. Midgut.

Its subcellular location is the secreted. Functionally, tight-binding competitive inhibitor of chymotrypsin-like proteases; inhibits host chymase, cathepsin G (CTSG) and chymotrypsin. Inhibits chymase-mediated generation of vasoconstrictor peptides: angiotensin II and endothelin I. Reduces chymase-mediated vascular permeability and vascular endothelial-cadherin degradation. This is Ixochymostatin from Ixodes scapularis (Black-legged tick).